A 436-amino-acid polypeptide reads, in one-letter code: 3-ketoacyl-CoA thiolase (436 aa).

Residue cysteine 99 is the Acyl-thioester intermediate of the active site. Residues histidine 392 and cysteine 422 each act as proton acceptor in the active site.

The protein belongs to the thiolase-like superfamily. Thiolase family. In terms of assembly, heterotetramer of two alpha chains (FadJ) and two beta chains (FadI).

It is found in the cytoplasm. The catalysed reaction is an acyl-CoA + acetyl-CoA = a 3-oxoacyl-CoA + CoA. It participates in lipid metabolism; fatty acid beta-oxidation. Its function is as follows. Catalyzes the final step of fatty acid oxidation in which acetyl-CoA is released and the CoA ester of a fatty acid two carbons shorter is formed. In Shewanella baltica (strain OS185), this protein is 3-ketoacyl-CoA thiolase.